A 408-amino-acid polypeptide reads, in one-letter code: 8-amino-7-oxononanoate synthase (408 aa).

A substrate-binding site is contributed by R20. 117-118 (GY) is a binding site for pyridoxal 5'-phosphate. H142 is a binding site for substrate. Positions 188, 216, and 244 each coordinate pyridoxal 5'-phosphate. K247 is subject to N6-(pyridoxal phosphate)lysine. T367 contributes to the substrate binding site.

It belongs to the class-II pyridoxal-phosphate-dependent aminotransferase family. BioF subfamily. In terms of assembly, homodimer. Pyridoxal 5'-phosphate serves as cofactor.

It catalyses the reaction 6-carboxyhexanoyl-[ACP] + L-alanine + H(+) = (8S)-8-amino-7-oxononanoate + holo-[ACP] + CO2. It functions in the pathway cofactor biosynthesis; biotin biosynthesis. In terms of biological role, catalyzes the decarboxylative condensation of pimeloyl-[acyl-carrier protein] and L-alanine to produce 8-amino-7-oxononanoate (AON), [acyl-carrier protein], and carbon dioxide. The polypeptide is 8-amino-7-oxononanoate synthase (Cupriavidus pinatubonensis (strain JMP 134 / LMG 1197) (Cupriavidus necator (strain JMP 134))).